The chain runs to 153 residues: Probable Brix domain-containing ribosomal biogenesis protein (153 aa).

The Brix domain occupies 1–153; it reads MQVLTTSRKP…RILKISRSSR (153 aa).

In terms of biological role, probably involved in the biogenesis of the ribosome. The chain is Probable Brix domain-containing ribosomal biogenesis protein from Archaeoglobus fulgidus (strain ATCC 49558 / DSM 4304 / JCM 9628 / NBRC 100126 / VC-16).